A 1309-amino-acid chain; its full sequence is Lysine-specific demethylase 2B (1309 aa).

S26 carries the post-translational modification Phosphoserine. Residues 147–315 enclose the JmjC domain; the sequence is FSHTKLEHLV…MQLRIYEIED (169 aa). T208 contributes to the substrate binding site. Residues H211 and D213 each contribute to the Fe cation site. K228 is a binding site for substrate. Fe cation is bound at residue H283. Positions 378-403 are enriched in acidic residues; the sequence is DMEEESCEQQPQEEEEEEEDKEEEGD. Residues 378 to 476 are disordered; it reads DMEEESCEQQ…PTGSPATEVS (99 aa). Basic and acidic residues predominate over residues 404–413; it reads GADKTPKPPT. The span at 415-424 shows a compositional bias: low complexity; the sequence is DPTSPTSTPP. Phosphoserine is present on residues S447 and S450. Phosphothreonine is present on T466. Residues 467–476 show a composition bias toward polar residues; that stretch reads PTGSPATEVS. S470 is modified (phosphoserine). The CXXC-type zinc finger occupies 579 to 625; it reads ARRRRTRCRKCEACLRTECGECHFCKDMKKFGGPGRMKQSCIMRQCI. Zn(2+) contacts are provided by C586, C589, C592, C597, C600, C603, C619, C624, C635, C638, C661, C664, H669, C672, C692, and C695. Residues 632–698 form a PHD-type zinc finger; sequence TAVCLVCGEA…CWECPKCNHA (67 aa). 2 disordered regions span residues 700-816 and 828-1005; these read KTGK…SLSP and QLKP…SASP. Basic and acidic residues predominate over residues 722-772; the sequence is KEQKMNRDNKEGQEPAKRRSECEEAPRRRSDEHPKKVPADGILRRKSDDVH. Positions 792–816 are enriched in low complexity; sequence SSLQTSPGSSSHLSPRPPLGSSLSP. Glycyl lysine isopeptide (Lys-Gly) (interchain with G-Cter in SUMO2) cross-links involve residues K830 and K863. Residues 883 to 892 are compositionally biased toward polar residues; the sequence is SRSSSPTAGP. Positions 905–914 are enriched in basic residues; that stretch reads KVKMRRKRRL. The span at 915–933 shows a compositional bias: basic and acidic residues; that stretch reads VNKELSKELSKELNHEIQK. Residues 916–944 are a coiled coil; the sequence is NKELSKELSKELNHEIQKTESTLAHESQQ. S924 is modified (phosphoserine). The segment covering 934–946 has biased composition (polar residues); that stretch reads TESTLAHESQQPI. A phosphoserine mark is found at S948 and S952. A compositionally biased stretch (basic and acidic residues) spans 955-968; sequence DEPKRPLSHCERPH. S991 and S1004 each carry phosphoserine. The F-box domain maps to 1032–1078; it reads DGAAHVMHREVWMAVFSYLSHRDLCVCMRVCRTWNRWCCDKRLWTRI. LRR repeat units lie at residues 1106 to 1127, 1129 to 1155, 1195 to 1220, 1221 to 1250, 1251 to 1275, and 1276 to 1309; these read WTNI…LRDL, LSGC…DVQW, GLDI…QLSY, CNHI…NLSD, CNKV…DLRY, and CKQV…QKLS.

Belongs to the JHDM1 histone demethylase family. Interacts with SKP1, forming heterodimers. The KDM2B-SKP1 heterodimeric complex interacts with the PCGF1-BCORL heterodimeric complex to form a homotetrameric polycomb repression complex 1 (PRC1.1). Directly interacts with CUL1. The SKP1-KDM2B interacts with UBB. Fe(2+) serves as cofactor.

It localises to the nucleus. Its subcellular location is the nucleolus. The protein localises to the chromosome. The catalysed reaction is N(6),N(6)-dimethyl-L-lysyl(36)-[histone H3] + 2 2-oxoglutarate + 2 O2 = L-lysyl(36)-[histone H3] + 2 formaldehyde + 2 succinate + 2 CO2. Its activity is regulated as follows. Histone demethylase activity is inhibited by fumarate. In terms of biological role, histone demethylase that demethylates 'Lys-4' and 'Lys-36' of histone H3, thereby playing a central role in histone code. Preferentially demethylates trimethylated H3 'Lys-4' and dimethylated H3 'Lys-36' residue while it has weak or no activity for mono- and tri-methylated H3 'Lys-36'. Preferentially binds the transcribed region of ribosomal RNA and represses the transcription of ribosomal RNA genes which inhibits cell growth and proliferation. May also serve as a substrate-recognition component of the SCF (SKP1-CUL1-F-box protein)-type E3 ubiquitin ligase complex. This Mus musculus (Mouse) protein is Lysine-specific demethylase 2B (Kdm2b).